The following is a 942-amino-acid chain: MQNKIIIHGARAHNLKNIDVEIPRDKLVVVTGLSGSGKSSLAFDTIYAEGQRRYVESLSAYARQFLGNMEKPDVDSIDGLSPAISIDQKTTSKNPRSTVGTVTEINDYLRLLYARVGTPYCINGHGAITASSAEQIVEQVLALPERTRMQILAPIVRRKKGQHKTIFEKIQKDGYVRVRVDGDIFDVTEVPELSKSKMHNIEVVIDRLVNKDGIRSRLFDSVEAALRLGDGYLMIDTMDGNELLFSEHYSCPVCGFTVPELEPRLFSFNAPFGSCPTCDGLGIKLEVDLDLVVPDPSKSLKEGALAPWNPISSNYYPTMLEQAMASFGVDMDTPFEALTEEERDLVLYGSGDREFHFHYVNDFGGERNIDIPFEGVVTNVNRRYHETNSDYTRNVMRGYMNELTCATCHGYRLNDQALCVHVGGEEGPHIGQISELSIADHLQLLEELELTENESTIAKPIVKEIHDRLTFLNNVGLNYLTLSRAAGTLSGGESQRIRLATQIGSNLSGVLYILDEPSIGLHQRDNDRLIESLKKMRDLGNTLIVVEHDEDTMMQADWLIDVGPGAGEFGGEIIASGTPKQVAKNKKSITGQYLSGKKFIPVPLERRSGNGRFIEIKGAAQNNLQSLDVRFPLGKFIAVTGVSGSGKSTLVNSILKKAVAQKLNRNADKPGKYHSISGIEHIERLIDIDQSPIGRTPRSNPATYTGVFDDIRDLFAQTNEAKIRGYKKGRFSFNVKGGRCEACSGDGIIKIEMHFLPDVYVPCEVCHGRRYNSETLEVHYKEKNIAEVLDMTVDDALVFFSAIPKIARKIQTIKDVGLGYVTLGQPATTLSGGEAQRMKLASELHKRSTGKSLYILDEPTTGLHTDDIARLLKVLERFVDDGNTVLVIEHNLDVIKSADHIIDLGPEGGVGGGQIVATGTPEEVAQVKESYTGHYLKVKLQQ.

32–39 provides a ligand contact to ATP; the sequence is GLSGSGKS. The segment at 251-278 adopts a C4-type zinc-finger fold; sequence CPVCGFTVPELEPRLFSFNAPFGSCPTC. ABC transporter domains follow at residues 308–589 and 609–937; these read WNPI…KKSI and GNGR…HYLK. Residue 641 to 648 participates in ATP binding; that stretch reads GVSGSGKS. A C4-type zinc finger spans residues 740 to 766; sequence CEACSGDGIIKIEMHFLPDVYVPCEVC.

The protein belongs to the ABC transporter superfamily. UvrA family. Forms a heterotetramer with UvrB during the search for lesions.

It localises to the cytoplasm. In terms of biological role, the UvrABC repair system catalyzes the recognition and processing of DNA lesions. UvrA is an ATPase and a DNA-binding protein. A damage recognition complex composed of 2 UvrA and 2 UvrB subunits scans DNA for abnormalities. When the presence of a lesion has been verified by UvrB, the UvrA molecules dissociate. The sequence is that of UvrABC system protein A from Streptococcus pyogenes serotype M3 (strain ATCC BAA-595 / MGAS315).